The sequence spans 200 residues: Rho-related protein racD (200 aa).

The GTP site is built by alanine 20, glycine 22, lysine 23, threonine 24, cysteine 25, tyrosine 39, and threonine 42. Residue threonine 24 participates in Mg(2+) binding. 2 consecutive short sequence motifs (switch) follow at residues 33-44 and 64-82; these read NEFPKDYVPTVF and DTAGQEDYEQLRPLSYPNT. Position 42 (threonine 42) interacts with Mg(2+). GTP contacts are provided by lysine 123, aspartate 125, and alanine 166. Position 197 is a cysteine methyl ester (cysteine 197). Cysteine 197 carries the S-geranylgeranyl cysteine lipid modification. Residues 198–200 constitute a propeptide, removed in mature form; it reads ALL.

This sequence belongs to the small GTPase superfamily. Rho family. It depends on Mg(2+) as a cofactor.

The protein localises to the cell membrane. The protein resides in the cytoplasm. Its subcellular location is the cytoskeleton. It carries out the reaction GTP + H2O = GDP + phosphate + H(+). Its activity is regulated as follows. Regulated by guanine nucleotide exchange factors (GEFs) which promote the exchange of bound GDP for free GTP, GTPase activating proteins (GAPs) which increase the GTP hydrolysis activity, and GDP dissociation inhibitors which inhibit the dissociation of the nucleotide from the GTPase. Functionally, small GTPase which cycles between active GTP-bound and inactive GDP-bound states. The chain is Rho-related protein racD from Entamoeba histolytica (strain ATCC 30459 / HM-1:IMSS / ABRM).